Here is a 599-residue protein sequence, read N- to C-terminus: Cytosolic Fe-S cluster assembly factor nar1 (599 aa).

Residues Cys-20, Cys-62, Cys-65, Cys-68, Cys-210, Cys-265, Cys-468, and Cys-472 each coordinate [4Fe-4S] cluster.

It belongs to the NARF family.

Functionally, component of the cytosolic Fe/S protein assembly machinery. Required for maturation of extramitochondrial Fe/S proteins. May play a role in the transfer of pre-assembled Fe/S clusters to target apoproteins. This chain is Cytosolic Fe-S cluster assembly factor nar1 (nar1), found in Aspergillus terreus (strain NIH 2624 / FGSC A1156).